Consider the following 354-residue polypeptide: Pyruvate dehydrogenase E1 component subunit alpha (354 aa).

Residues 1–29 form a disordered region; that stretch reads MAKATQDSNRPHKADVGSAIPNHDLPPIP.

As to quaternary structure, heterodimer of an alpha and a beta chain. Thiamine diphosphate serves as cofactor.

The catalysed reaction is N(6)-[(R)-lipoyl]-L-lysyl-[protein] + pyruvate + H(+) = N(6)-[(R)-S(8)-acetyldihydrolipoyl]-L-lysyl-[protein] + CO2. Its function is as follows. The pyruvate dehydrogenase complex catalyzes the overall conversion of pyruvate to acetyl-CoA and CO(2). It contains multiple copies of three enzymatic components: pyruvate dehydrogenase (E1), dihydrolipoamide acetyltransferase (E2) and lipoamide dehydrogenase (E3). The polypeptide is Pyruvate dehydrogenase E1 component subunit alpha (pdhA) (Zymomonas mobilis subsp. mobilis (strain ATCC 31821 / ZM4 / CP4)).